A 220-amino-acid chain; its full sequence is Probable 26S proteasome regulatory subunit p27 (220 aa).

One can recognise a PDZ domain in the interval 119-196 (ARRNNDDQAI…PVLLLREGQI (78 aa)).

It belongs to the proteasome subunit p27 family. Part of a transient complex containing NAS2, RPT4 and RPT5 formed during the assembly of the 26S proteasome.

Its function is as follows. Acts as a chaperone during the assembly of the 26S proteasome, specifically of the base subcomplex of the 19S regulatory complex (RC). During the base subcomplex assembly is part of a NAS2:RPT4:RPT5 module; NAS2 is released during the further base assembly process. This chain is Probable 26S proteasome regulatory subunit p27 (NAS2), found in Saccharomyces cerevisiae (strain ATCC 204508 / S288c) (Baker's yeast).